A 391-amino-acid polypeptide reads, in one-letter code: S-adenosylmethionine synthase 5 (391 aa).

Glu9 is a binding site for Mg(2+). Residue His15 coordinates ATP. Glu43 contacts K(+). L-methionine contacts are provided by Glu56 and Gln99. ATP contacts are provided by residues 167–169 (DGK), 235–238 (SGRF), Asp246, 252–253 (RK), Ala269, Lys273, and Lys277. An L-methionine-binding site is contributed by Asp246. An L-methionine-binding site is contributed by Lys277.

This sequence belongs to the AdoMet synthase family. Homotetramer. Mn(2+) is required as a cofactor. Requires Mg(2+) as cofactor. It depends on Co(2+) as a cofactor. K(+) serves as cofactor.

Its subcellular location is the cytoplasm. The enzyme catalyses L-methionine + ATP + H2O = S-adenosyl-L-methionine + phosphate + diphosphate. It functions in the pathway amino-acid biosynthesis; S-adenosyl-L-methionine biosynthesis; S-adenosyl-L-methionine from L-methionine: step 1/1. Catalyzes the formation of S-adenosylmethionine from methionine and ATP. The reaction comprises two steps that are both catalyzed by the same enzyme: formation of S-adenosylmethionine (AdoMet) and triphosphate, and subsequent hydrolysis of the triphosphate. The protein is S-adenosylmethionine synthase 5 (METK5) of Vitis vinifera (Grape).